Reading from the N-terminus, the 264-residue chain is 3-methyl-2-oxobutanoate hydroxymethyltransferase (264 aa).

Residues Asp-45 and Asp-84 each coordinate Mg(2+). Residues Asp-45–Ser-46, Asp-84, and Lys-112 contribute to the 3-methyl-2-oxobutanoate site. Glu-114 is a binding site for Mg(2+). Glu-181 functions as the Proton acceptor in the catalytic mechanism.

The protein belongs to the PanB family. Homodecamer; pentamer of dimers. It depends on Mg(2+) as a cofactor.

It localises to the cytoplasm. It carries out the reaction 3-methyl-2-oxobutanoate + (6R)-5,10-methylene-5,6,7,8-tetrahydrofolate + H2O = 2-dehydropantoate + (6S)-5,6,7,8-tetrahydrofolate. The protein operates within cofactor biosynthesis; (R)-pantothenate biosynthesis; (R)-pantoate from 3-methyl-2-oxobutanoate: step 1/2. Its function is as follows. Catalyzes the reversible reaction in which hydroxymethyl group from 5,10-methylenetetrahydrofolate is transferred onto alpha-ketoisovalerate to form ketopantoate. In Escherichia coli O127:H6 (strain E2348/69 / EPEC), this protein is 3-methyl-2-oxobutanoate hydroxymethyltransferase.